The following is a 347-amino-acid chain: Ferrochelatase (347 aa).

Positions 193 and 273 each coordinate Fe cation.

The protein belongs to the ferrochelatase family.

It is found in the cytoplasm. It catalyses the reaction heme b + 2 H(+) = protoporphyrin IX + Fe(2+). It participates in porphyrin-containing compound metabolism; protoheme biosynthesis; protoheme from protoporphyrin-IX: step 1/1. Functionally, catalyzes the ferrous insertion into protoporphyrin IX. The polypeptide is Ferrochelatase (Rickettsia canadensis (strain McKiel)).